A 295-amino-acid chain; its full sequence is Small ribosomal subunit biogenesis GTPase RsgA (295 aa).

In terms of domain architecture, CP-type G spans 68–228 (KNLLTKPHVA…VVDTPGFANL (161 aa)). Residues 117–120 (NKMD) and 170–178 (GLSGVGKSS) each bind GTP. 4 residues coordinate Zn(2+): Cys-250, Cys-255, His-257, and Cys-263.

This sequence belongs to the TRAFAC class YlqF/YawG GTPase family. RsgA subfamily. In terms of assembly, monomer. Associates with 30S ribosomal subunit, binds 16S rRNA. Zn(2+) serves as cofactor.

It localises to the cytoplasm. In terms of biological role, one of several proteins that assist in the late maturation steps of the functional core of the 30S ribosomal subunit. Helps release RbfA from mature subunits. May play a role in the assembly of ribosomal proteins into the subunit. Circularly permuted GTPase that catalyzes slow GTP hydrolysis, GTPase activity is stimulated by the 30S ribosomal subunit. The sequence is that of Small ribosomal subunit biogenesis GTPase RsgA from Thermotoga maritima (strain ATCC 43589 / DSM 3109 / JCM 10099 / NBRC 100826 / MSB8).